The chain runs to 531 residues: Histone-arginine methyltransferase CARMER (531 aa).

The SAM-dependent MTase PRMT-type domain maps to 141–450; the sequence is ASQYFQFYGY…QSYDVTIDLH (310 aa). Positions 154, 163, 187, 209, 238, and 266 each coordinate S-adenosyl-L-methionine. An Asymmetric dimethylarginine; by autocatalysis modification is found at R501.

Belongs to the class I-like SAM-binding methyltransferase superfamily. Protein arginine N-methyltransferase family. In terms of assembly, homodimer. In terms of processing, the dimethylated protein is the major form.

It is found in the cytoplasm. The protein localises to the nucleus. The enzyme catalyses L-arginyl-[protein] + 2 S-adenosyl-L-methionine = N(omega),N(omega)-dimethyl-L-arginyl-[protein] + 2 S-adenosyl-L-homocysteine + 2 H(+). Its function is as follows. Methylates (mono- and asymmetric dimethylation) the guanidino nitrogens of arginyl residues in proteins. May methylate histone H3 at 'Arg-17' and activate transcription via chromatin remodeling. The sequence is that of Histone-arginine methyltransferase CARMER (Art4) from Drosophila persimilis (Fruit fly).